Reading from the N-terminus, the 983-residue chain is Ephrin type-A receptor 3 (983 aa).

Positions methionine 1–glycine 20 are cleaved as a signal peptide. The Extracellular segment spans residues glutamate 21–histidine 540. In terms of domain architecture, Eph LBD spans glutamate 29 to lysine 206. N-linked (GlcNAc...) asparagine glycans are attached at residues asparagine 231, asparagine 336, asparagine 390, asparagine 403, and asparagine 492. Fibronectin type-III domains lie at proline 324–alanine 434 and alanine 435–aspartate 530. The chain crosses the membrane as a helical span at residues valine 541–glycine 564. Residues arginine 565–valine 983 are Cytoplasmic-facing. Tyrosine 596 and tyrosine 602 each carry phosphotyrosine; by autocatalysis. A Protein kinase domain is found at isoleucine 621–isoleucine 882. ATP-binding positions include glycine 628–glycine 633, lysine 653, and glutamate 700–serine 706. Position 701 is a phosphotyrosine; by autocatalysis (tyrosine 701). Catalysis depends on aspartate 746, which acts as the Proton acceptor. ATP is bound at residue arginine 750–asparagine 751. Tyrosine 779 is modified (phosphotyrosine; by autocatalysis). Residues alanine 911 to glutamine 975 form the SAM domain. Phosphotyrosine is present on tyrosine 937. The PDZ-binding motif lies at valine 981–valine 983.

It belongs to the protein kinase superfamily. Tyr protein kinase family. Ephrin receptor subfamily. Heterotetramer upon binding of the ligand. The heterotetramer is composed of an ephrin dimer and a receptor dimer. Oligomerization is probably required to induce biological responses. Forms a ternary EFNA5-EPHA3-ADAM10 complex mediating EFNA5 extracellular domain shedding by ADAM10 which regulates the EFNA5-EPHA3 complex internalization and function. Interacts (phosphorylated) with PTPN1; dephosphorylates EPHA3 and may regulate its trafficking and function. Interacts (phosphorylated) with CRK; mediates EFNA5-EPHA3 signaling through RHOA GTPase activation. Interacts with NCK1 (via SH2 domain); mediates EFNA5-EPHA3 signaling. Post-translationally, autophosphorylates upon activation by EFNA5. Phosphorylation on Tyr-602 mediates interaction with NCK1. Dephosphorylated by PTPN1. Greatest levels of expression occurring in the brain, also detected in testis. Expressed in myogenic progenitor cells.

It is found in the cell membrane. It localises to the secreted. It carries out the reaction L-tyrosyl-[protein] + ATP = O-phospho-L-tyrosyl-[protein] + ADP + H(+). In terms of biological role, receptor tyrosine kinase which binds promiscuously membrane-bound ephrin family ligands residing on adjacent cells, leading to contact-dependent bidirectional signaling into neighboring cells. The signaling pathway downstream of the receptor is referred to as forward signaling while the signaling pathway downstream of the ephrin ligand is referred to as reverse signaling. Highly promiscuous for ephrin-A ligands it binds preferentially EFNA5. Upon activation by EFNA5 regulates cell-cell adhesion, cytoskeletal organization and cell migration. Plays a role in cardiac cells migration and differentiation and regulates the formation of the atrioventricular canal and septum during development probably through activation by EFNA1. Involved in the retinotectal mapping of neurons. May also control the segregation but not the guidance of motor and sensory axons during neuromuscular circuit development. The protein is Ephrin type-A receptor 3 (Epha3) of Mus musculus (Mouse).